We begin with the raw amino-acid sequence, 924 residues long: Periplasmic nitrate reductase (924 aa).

The segment at residues 1-29 (MNRRDFIKNTAIASACGVAGLSVPSSVLA) is a signal peptide (tat-type signal). The region spanning 35-91 (WRWDKAVCRFCGTGCGILVARQDGKIVAVKGDPAAPVNRGLNCIKGYFNAKIMYGED) is the 4Fe-4S Mo/W bis-MGD-type domain. Positions 42, 45, 49, and 77 each coordinate [4Fe-4S] cluster. Residues K79, Q147, N172, C176, 209 to 216 (WGANMAEM), M417, Q421, N527, 552 to 553 (SD), K575, D602, and 814 to 823 (TGRVLEHWHS) each bind Mo-bis(molybdopterin guanine dinucleotide). W890 contacts substrate. Mo-bis(molybdopterin guanine dinucleotide) is bound by residues N898 and K915.

Belongs to the prokaryotic molybdopterin-containing oxidoreductase family. NasA/NapA/NarB subfamily. In terms of assembly, component of the periplasmic nitrate reductase NapAB complex composed of NapA and NapB. [4Fe-4S] cluster is required as a cofactor. Requires Mo-bis(molybdopterin guanine dinucleotide) as cofactor. In terms of processing, predicted to be exported by the Tat system. The position of the signal peptide cleavage has not been experimentally proven.

It is found in the periplasm. It catalyses the reaction 2 Fe(II)-[cytochrome] + nitrate + 2 H(+) = 2 Fe(III)-[cytochrome] + nitrite + H2O. Catalytic subunit of the periplasmic nitrate reductase complex NapAB. Receives electrons from NapB and catalyzes the reduction of nitrate to nitrite. This is Periplasmic nitrate reductase from Campylobacter lari (strain RM2100 / D67 / ATCC BAA-1060).